We begin with the raw amino-acid sequence, 392 residues long: Hercynylcysteine sulfoxide lyase (392 aa).

Lysine 219 is modified (N6-(pyridoxal phosphate)lysine).

Belongs to the class-V pyridoxal-phosphate-dependent aminotransferase family. EgtE subfamily. Pyridoxal 5'-phosphate serves as cofactor.

The protein localises to the cytoplasm. It is found in the nucleus. It carries out the reaction S-(hercyn-2-yl)-L-cysteine S-oxide + AH2 + H(+) = ergothioneine + pyruvate + A + NH4(+). Its pathway is amino-acid biosynthesis; ergothioneine biosynthesis. In terms of biological role, catalyzes the conversion of hercynylcysteine sulfoxide to ergothioneine by cleaving the cysteine residue at the sulfur atom, the last step in the biosynthesis pathway of ergothioneine. The sequence is that of Hercynylcysteine sulfoxide lyase from Schizosaccharomyces pombe (strain 972 / ATCC 24843) (Fission yeast).